A 209-amino-acid polypeptide reads, in one-letter code: Thiamine-phosphate synthase (209 aa).

4-amino-2-methyl-5-(diphosphooxymethyl)pyrimidine-binding positions include 36 to 40 (QYRDK) and Asn68. Positions 69 and 87 each coordinate Mg(2+). Thr106 is a 4-amino-2-methyl-5-(diphosphooxymethyl)pyrimidine binding site. Residue 133 to 135 (SST) coordinates 2-[(2R,5Z)-2-carboxy-4-methylthiazol-5(2H)-ylidene]ethyl phosphate. Lys136 lines the 4-amino-2-methyl-5-(diphosphooxymethyl)pyrimidine pocket. Gly163 serves as a coordination point for 2-[(2R,5Z)-2-carboxy-4-methylthiazol-5(2H)-ylidene]ethyl phosphate.

Belongs to the thiamine-phosphate synthase family. Mg(2+) is required as a cofactor.

The catalysed reaction is 2-[(2R,5Z)-2-carboxy-4-methylthiazol-5(2H)-ylidene]ethyl phosphate + 4-amino-2-methyl-5-(diphosphooxymethyl)pyrimidine + 2 H(+) = thiamine phosphate + CO2 + diphosphate. The enzyme catalyses 2-(2-carboxy-4-methylthiazol-5-yl)ethyl phosphate + 4-amino-2-methyl-5-(diphosphooxymethyl)pyrimidine + 2 H(+) = thiamine phosphate + CO2 + diphosphate. It catalyses the reaction 4-methyl-5-(2-phosphooxyethyl)-thiazole + 4-amino-2-methyl-5-(diphosphooxymethyl)pyrimidine + H(+) = thiamine phosphate + diphosphate. It functions in the pathway cofactor biosynthesis; thiamine diphosphate biosynthesis; thiamine phosphate from 4-amino-2-methyl-5-diphosphomethylpyrimidine and 4-methyl-5-(2-phosphoethyl)-thiazole: step 1/1. In terms of biological role, condenses 4-methyl-5-(beta-hydroxyethyl)thiazole monophosphate (THZ-P) and 2-methyl-4-amino-5-hydroxymethyl pyrimidine pyrophosphate (HMP-PP) to form thiamine monophosphate (TMP). This Pseudomonas aeruginosa (strain UCBPP-PA14) protein is Thiamine-phosphate synthase.